A 235-amino-acid polypeptide reads, in one-letter code: Protein GrpE (235 aa).

2 stretches are compositionally biased toward basic and acidic residues: residues methionine 1–asparagine 16 and asparagine 24–glutamine 35. The tract at residues methionine 1 to lysine 51 is disordered.

It belongs to the GrpE family. In terms of assembly, homodimer.

The protein resides in the cytoplasm. Functionally, participates actively in the response to hyperosmotic and heat shock by preventing the aggregation of stress-denatured proteins, in association with DnaK and GrpE. It is the nucleotide exchange factor for DnaK and may function as a thermosensor. Unfolded proteins bind initially to DnaJ; upon interaction with the DnaJ-bound protein, DnaK hydrolyzes its bound ATP, resulting in the formation of a stable complex. GrpE releases ADP from DnaK; ATP binding to DnaK triggers the release of the substrate protein, thus completing the reaction cycle. Several rounds of ATP-dependent interactions between DnaJ, DnaK and GrpE are required for fully efficient folding. This is Protein GrpE from Malacoplasma penetrans (strain HF-2) (Mycoplasma penetrans).